The sequence spans 242 residues: Glucosamine-6-phosphate deaminase (242 aa).

The active-site Proton acceptor; for enolization step is aspartate 71. The active-site For ring-opening step is asparagine 142. Histidine 144 acts as the Proton acceptor; for ring-opening step in catalysis. Glutamate 149 acts as the For ring-opening step in catalysis.

This sequence belongs to the glucosamine/galactosamine-6-phosphate isomerase family. NagB subfamily.

The catalysed reaction is alpha-D-glucosamine 6-phosphate + H2O = beta-D-fructose 6-phosphate + NH4(+). The protein operates within amino-sugar metabolism; N-acetylneuraminate degradation; D-fructose 6-phosphate from N-acetylneuraminate: step 5/5. Functionally, catalyzes the reversible isomerization-deamination of glucosamine 6-phosphate (GlcN6P) to form fructose 6-phosphate (Fru6P) and ammonium ion. The chain is Glucosamine-6-phosphate deaminase from Malacoplasma penetrans (strain HF-2) (Mycoplasma penetrans).